We begin with the raw amino-acid sequence, 387 residues long: Xylose isomerase (387 aa).

Catalysis depends on residues His-53 and Asp-56. Mg(2+) contacts are provided by Glu-180, Glu-216, His-219, Asp-244, Asp-254, Asp-256, and Asp-286.

The protein belongs to the xylose isomerase family. As to quaternary structure, homotetramer. Mg(2+) is required as a cofactor.

It localises to the cytoplasm. It catalyses the reaction alpha-D-xylose = alpha-D-xylulofuranose. This is Xylose isomerase (xylA) from Thermus thermophilus (strain ATCC 27634 / DSM 579 / HB8).